The following is a 576-amino-acid chain: Apolipoprotein N-acyltransferase 1 (576 aa).

The next 7 helical transmembrane spans lie at 15 to 35, 38 to 58, 60 to 80, 92 to 112, 128 to 148, 168 to 188, and 204 to 224; these read LILCFGIGIGTVFGLSPFSFF, GVFASISCIFLFFSLNRTSIW, AFLWLLILSQILNFTAFYWIP, FVSILFFFLYGLISHLKFFLF, YILLIFPAAGTLSDMITFQIF, ICGVYGLSFLLLFISSTFLIL, and IASLICITFIYGFGLYRIGYI. The region spanning 236–538 is the CN hydrolase domain; the sequence is LSVLMIQPDT…TGTRAFSIRL (303 aa). Glutamate 285 serves as the catalytic Proton acceptor. Lysine 355 is a catalytic residue. The active-site Nucleophile is the cysteine 446. Residues 549-569 form a helical membrane-spanning segment; that stretch reads FGNSFLWIFCILILISRLIFV.

Belongs to the CN hydrolase family. Apolipoprotein N-acyltransferase subfamily.

The protein resides in the cell inner membrane. The enzyme catalyses N-terminal S-1,2-diacyl-sn-glyceryl-L-cysteinyl-[lipoprotein] + a glycerophospholipid = N-acyl-S-1,2-diacyl-sn-glyceryl-L-cysteinyl-[lipoprotein] + a 2-acyl-sn-glycero-3-phospholipid + H(+). It functions in the pathway protein modification; lipoprotein biosynthesis (N-acyl transfer). In terms of biological role, catalyzes the phospholipid dependent N-acylation of the N-terminal cysteine of apolipoprotein, the last step in lipoprotein maturation. The polypeptide is Apolipoprotein N-acyltransferase 1 (Leptospira interrogans serogroup Icterohaemorrhagiae serovar Lai (strain 56601)).